Here is a 185-residue protein sequence, read N- to C-terminus: Pycsar effector protein EcPycTM (185 aa).

The next 3 membrane-spanning stretches (helical) occupy residues 32–52, 63–83, and 141–161; these read ALLL…VGYF, MVIF…SVLL, and FILS…VSWI.

Its subcellular location is the cell inner membrane. Functionally, pycsar (pyrimidine cyclase system for antiphage resistance) provides immunity against bacteriophage. The pyrimidine cyclase (PycC) synthesizes cyclic nucleotides in response to infection; these serve as specific second messenger signals. The signals activate the adjacent effector, leading to bacterial cell death and abortive phage infection. A clade E Pycsar system. In terms of biological role, the effector component of a two-gene Pycsar system. Expression of this and adjacent cytidylate cyclase EcPycC (AC P0DV24) confers resistance to bacteriophage P1 and T5; this protein is required for resistance. When cells expressing the Pycsar system are infected by phage T5 at low multiplicity of infection (0.2 MOI) the culture survives, at 2.0 MOI bacteria enter growth arrest. The same cells enter growth arrest after exposure to 250 uM cCMP but not cUMP; this effector protein responds only to cCMP, usually produced by its cognate NTP cyclase. Some of the cells treated with cCMP have abnormal membrane protrusions, probably due to effects on membrane integrity. The polypeptide is Pycsar effector protein EcPycTM (Escherichia coli).